Here is a 237-residue protein sequence, read N- to C-terminus: CDP-diacylglycerol--serine O-phosphatidyltransferase (237 aa).

A run of 8 helical transmembrane segments spans residues 3-23 (INPL…LGMM), 25-45 (IFYA…ASLI), 73-93 (VIAF…YNFG), 95-115 (IGMA…ARFN), 124-144 (YSFI…CVLL), 150-170 (FLEG…GVLM), 184-204 (WNLK…VRPL), and 207-227 (LSVF…FLMV).

The protein belongs to the CDP-alcohol phosphatidyltransferase class-I family.

The protein localises to the cell membrane. The catalysed reaction is a CDP-1,2-diacyl-sn-glycerol + L-serine = a 1,2-diacyl-sn-glycero-3-phospho-L-serine + CMP + H(+). This chain is CDP-diacylglycerol--serine O-phosphatidyltransferase (pssA), found in Helicobacter pylori (strain ATCC 700392 / 26695) (Campylobacter pylori).